We begin with the raw amino-acid sequence, 265 residues long: UPF0294 protein KPK_4510 (265 aa).

It belongs to the UPF0294 family.

The protein localises to the cytoplasm. The polypeptide is UPF0294 protein KPK_4510 (Klebsiella pneumoniae (strain 342)).